Consider the following 166-residue polypeptide: Protein phosphatase 1 regulatory subunit 1A (166 aa).

M1 carries the N-acetylmethionine modification. Residues 1 to 166 form a disordered region; sequence MEQDNSPRKI…SQDSQGASAV (166 aa). An essential for activity region spans residues 9-12; it reads KIQF. The segment covering 19–29 has biased composition (basic and acidic residues); that stretch reads PHLDPEAAEQI. The residue at position 35 (T35) is a Phosphothreonine; by PKA. An essential for activity region spans residues 42 to 54; it reads TSDQSSPEVDEDR. A phosphoserine mark is found at S43, S46, S47, and S67. Residues 104 to 114 are compositionally biased toward low complexity; sequence AAEGTGAQESQ. Over residues 143-152 the composition is skewed to basic and acidic residues; the sequence is AQERRGEEPS. The interval 143–166 is interaction with PPP1R15A; that stretch reads AQERRGEEPSTAKTSQDSQGASAV. Positions 153 to 166 are enriched in polar residues; that stretch reads TAKTSQDSQGASAV.

It belongs to the protein phosphatase inhibitor 1 family. In terms of assembly, interacts with PPP1R15A. In terms of processing, phosphorylation of Thr-35 is required for activity.

Its function is as follows. Inhibitor of protein-phosphatase 1. This protein may be important in hormonal control of glycogen metabolism. Hormones that elevate intracellular cAMP increase I-1 activity in many tissues. I-1 activation may impose cAMP control over proteins that are not directly phosphorylated by PKA. Following a rise in intracellular calcium, I-1 is inactivated by calcineurin (or PP2B). Does not inhibit type-2 phosphatases. This chain is Protein phosphatase 1 regulatory subunit 1A (PPP1R1A), found in Oryctolagus cuniculus (Rabbit).